An 895-amino-acid polypeptide reads, in one-letter code: Receptor-like protein kinase FERONIA (895 aa).

An N-terminal signal peptide occupies residues 1–27 (MKITEGRFRLSLLLLLLLISAATLISA). Topologically, residues 28-447 (ADYSPTEKIL…TTRKSKSNTA (420 aa)) are extracellular. Residues N46, N124, N142, N171, N219, N269, N305, N330, N345, and N410 are each glycosylated (N-linked (GlcNAc...) asparagine). The chain crosses the membrane as a helical span at residues 448 to 468 (IIAGAASGAVVLALIIGFCVF). The Cytoplasmic portion of the chain corresponds to 469 to 895 (GAYRRRKRGD…FSQIMNPKGR (427 aa)). One can recognise a Protein kinase domain in the interval 536–810 (FDESRVLGVG…GDVLWNLEFA (275 aa)). ATP contacts are provided by residues 542–550 (LGVGGFGKV) and K565. Residue D661 is the Proton acceptor of the active site. Residues 844-895 (NDKSSDVYEGNVTDSRSSGIDMSIGGRSLASEDSDGLTPSAVFSQIMNPKGR) are disordered. Phosphoserine is present on residues S858, S866, S871, and S874. Over residues 884-895 (AVFSQIMNPKGR) the composition is skewed to polar residues.

This sequence belongs to the protein kinase superfamily. Ser/Thr protein kinase family. Interacts with ROPGEF1. Interacts with RALF1; triggering phosphorylation status and subsequent activation. Interacts with LRE and LLG1. Interacts, via its extracellular domain, with FERONIA at the synergid cell surface. In terms of processing, autophosphorylated. Phosphorylated at Ser-858, Ser-871 and Ser-874 upon activation by RALF1. Expressed in leaves, buds, flowers, siliques, young ovules primordia, and young anthers with immature pollen, but not detected in mature pollen. Highest expression in the synergid cells of the female gametophyte.

The protein resides in the cell membrane. The enzyme catalyses L-seryl-[protein] + ATP = O-phospho-L-seryl-[protein] + ADP + H(+). It catalyses the reaction L-threonyl-[protein] + ATP = O-phospho-L-threonyl-[protein] + ADP + H(+). Its function is as follows. Receptor-like protein kinase that mediates the female control of male gamete delivery during fertilization, including growth cessation of compatible pollen tubes ensuring a reproductive isolation barriers, by regulating MLO7 subcellular polarization upon pollen tube perception in the female gametophyte synergids. Required for cell elongation during vegetative growth, mostly in a brassinosteroids- (BR-) independent manner. Acts as an upstream regulator for the Rac/Rop-signaling pathway that controls ROS-mediated root hair development. Seems to regulate a cross-talk between brassinosteroids and ethylene signaling pathways during hypocotyl elongation. Negative regulator of brassinosteroid response in light-grown hypocotyls, but required for brassinosteroid response in etiolated seedlings. Mediates sensitivity to powdery mildew (e.g. Golovinomyces orontii). Positive regulator of auxin-promoted growth that represses the abscisic acid (ABA) signaling via the activation of ABI2 phosphatase. Required for RALF1-mediated extracellular alkalinization in a signaling pathway preventing cell expansion. This Arabidopsis thaliana (Mouse-ear cress) protein is Receptor-like protein kinase FERONIA.